The following is a 357-amino-acid chain: Fructose-bisphosphate aldolase, cytoplasmic isozyme 1 (357 aa).

Substrate is bound by residues Arg-52 and Lys-142. Catalysis depends on Glu-183, which acts as the Proton acceptor. Residue Lys-225 is the Schiff-base intermediate with dihydroxyacetone-P of the active site.

This sequence belongs to the class I fructose-bisphosphate aldolase family.

The protein localises to the cytoplasm. It carries out the reaction beta-D-fructose 1,6-bisphosphate = D-glyceraldehyde 3-phosphate + dihydroxyacetone phosphate. It participates in carbohydrate degradation; glycolysis; D-glyceraldehyde 3-phosphate and glycerone phosphate from D-glucose: step 4/4. This Pisum sativum (Garden pea) protein is Fructose-bisphosphate aldolase, cytoplasmic isozyme 1.